We begin with the raw amino-acid sequence, 500 residues long: NAD(P)H-quinone oxidoreductase chain 4, chloroplastic (500 aa).

Helical transmembrane passes span 4–24, 35–55, 87–107, 113–130, 134–154, 167–187, 211–231, 242–262, 272–292, 305–325, 330–350, 386–406, 416–436, and 462–482; these read FPWL…MLFL, YTIC…CYNF, IGTI…AFPV, LFHF…GSFS, LLLF…LLAM, FILY…GLSL, ILFY…IPLH, HYST…YGLV, AHSM…IYAA, IAYS…SITD, GAIL…FLAG, LALP…GIIT, ILII…LLSM, and LFLS…PDFV.

Belongs to the complex I subunit 4 family.

It is found in the plastid. It localises to the chloroplast thylakoid membrane. The enzyme catalyses a plastoquinone + NADH + (n+1) H(+)(in) = a plastoquinol + NAD(+) + n H(+)(out). The catalysed reaction is a plastoquinone + NADPH + (n+1) H(+)(in) = a plastoquinol + NADP(+) + n H(+)(out). The polypeptide is NAD(P)H-quinone oxidoreductase chain 4, chloroplastic (Lepidium virginicum (Virginia pepperweed)).